We begin with the raw amino-acid sequence, 489 residues long: Ketol-acid reductoisomerase (NADP(+)) (489 aa).

Residues 17–208 (LGVCEFMEQS…GGHKAGVLRS (192 aa)) form the KARI N-terminal Rossmann domain. Residues 45–48 (CGAQ), R68, R76, S78, and 108–110 (DKQ) contribute to the NADP(+) site. The active site involves H132. G158 serves as a coordination point for NADP(+). 2 consecutive KARI C-terminal knotted domains span residues 209–344 (SFVA…KTAP) and 345–485 (QEAP…MTAM). Mg(2+) is bound by residues D217, E221, E389, and E393. S414 provides a ligand contact to substrate.

It belongs to the ketol-acid reductoisomerase family. Mg(2+) serves as cofactor.

It catalyses the reaction (2R)-2,3-dihydroxy-3-methylbutanoate + NADP(+) = (2S)-2-acetolactate + NADPH + H(+). The enzyme catalyses (2R,3R)-2,3-dihydroxy-3-methylpentanoate + NADP(+) = (S)-2-ethyl-2-hydroxy-3-oxobutanoate + NADPH + H(+). The protein operates within amino-acid biosynthesis; L-isoleucine biosynthesis; L-isoleucine from 2-oxobutanoate: step 2/4. Its pathway is amino-acid biosynthesis; L-valine biosynthesis; L-valine from pyruvate: step 2/4. In terms of biological role, involved in the biosynthesis of branched-chain amino acids (BCAA). Catalyzes an alkyl-migration followed by a ketol-acid reduction of (S)-2-acetolactate (S2AL) to yield (R)-2,3-dihydroxy-isovalerate. In the isomerase reaction, S2AL is rearranged via a Mg-dependent methyl migration to produce 3-hydroxy-3-methyl-2-ketobutyrate (HMKB). In the reductase reaction, this 2-ketoacid undergoes a metal-dependent reduction by NADPH to yield (R)-2,3-dihydroxy-isovalerate. In Flavobacterium johnsoniae (strain ATCC 17061 / DSM 2064 / JCM 8514 / BCRC 14874 / CCUG 350202 / NBRC 14942 / NCIMB 11054 / UW101) (Cytophaga johnsonae), this protein is Ketol-acid reductoisomerase (NADP(+)).